The sequence spans 543 residues: CTP synthase (543 aa).

Residues methionine 1–isoleucine 265 form an amidoligase domain region. Serine 13 provides a ligand contact to CTP. Residue serine 13 participates in UTP binding. Serine 14 to leucine 19 contacts ATP. An L-glutamine-binding site is contributed by tyrosine 54. An ATP-binding site is contributed by aspartate 71. Positions 71 and 139 each coordinate Mg(2+). CTP-binding positions include aspartate 146 to glutamate 148, lysine 186 to glutamine 191, and lysine 222. Residues lysine 186 to glutamine 191 and lysine 222 each bind UTP. Residues threonine 291 to leucine 542 enclose the Glutamine amidotransferase type-1 domain. Glycine 354 contacts L-glutamine. Cysteine 381 acts as the Nucleophile; for glutamine hydrolysis in catalysis. Residues leucine 382–glutamine 385, glutamate 405, and arginine 470 contribute to the L-glutamine site. Active-site residues include histidine 515 and glutamate 517.

The protein belongs to the CTP synthase family. As to quaternary structure, homotetramer.

It carries out the reaction UTP + L-glutamine + ATP + H2O = CTP + L-glutamate + ADP + phosphate + 2 H(+). The catalysed reaction is L-glutamine + H2O = L-glutamate + NH4(+). The enzyme catalyses UTP + NH4(+) + ATP = CTP + ADP + phosphate + 2 H(+). Its pathway is pyrimidine metabolism; CTP biosynthesis via de novo pathway; CTP from UDP: step 2/2. Its activity is regulated as follows. Allosterically activated by GTP, when glutamine is the substrate; GTP has no effect on the reaction when ammonia is the substrate. The allosteric effector GTP functions by stabilizing the protein conformation that binds the tetrahedral intermediate(s) formed during glutamine hydrolysis. Inhibited by the product CTP, via allosteric rather than competitive inhibition. In terms of biological role, catalyzes the ATP-dependent amination of UTP to CTP with either L-glutamine or ammonia as the source of nitrogen. Regulates intracellular CTP levels through interactions with the four ribonucleotide triphosphates. This Sphingopyxis alaskensis (strain DSM 13593 / LMG 18877 / RB2256) (Sphingomonas alaskensis) protein is CTP synthase.